An 831-amino-acid polypeptide reads, in one-letter code: Elongator complex protein 2 (831 aa).

13 WD repeats span residues 56–100, 105–152, 158–200, 205–246, 280–328, 338–377, 385–424, 438–476, 565–609, 612–651, 667–706, 718–762, and 775–831; these read GHTA…VLKS, GHEG…VKYL, RDGF…FQKA, GHED…ASFE, GHEN…GVWL, GNTL…PRQW, GHFD…DQKD, IHGY…VENF, GHGY…QVQS, FHTL…SSEF, VHSR…HNPM, DVGS…QEIN, and SHSL…RRAL.

It belongs to the WD repeat ELP2 family. Component of the elongator complex which consists of ELP1, ELP2, ELP3, ELP4, ELP5 and ELP6. Interacts with STAT3 and JAKs.

Its subcellular location is the cytoplasm. The protein localises to the nucleus. It functions in the pathway tRNA modification; 5-methoxycarbonylmethyl-2-thiouridine-tRNA biosynthesis. In terms of biological role, component of the elongator complex which is required for multiple tRNA modifications, including mcm5U (5-methoxycarbonylmethyl uridine), mcm5s2U (5-methoxycarbonylmethyl-2-thiouridine), and ncm5U (5-carbamoylmethyl uridine). The elongator comple catalyzes the formation of carboxymethyluridine in the wobble base at position 34 in tRNAs. In Mus musculus (Mouse), this protein is Elongator complex protein 2 (Elp2).